The sequence spans 525 residues: Lysine--tRNA ligase (525 aa).

Residues Glu-419 and Glu-426 each contribute to the Mg(2+) site.

The protein belongs to the class-II aminoacyl-tRNA synthetase family. Homodimer. It depends on Mg(2+) as a cofactor.

The protein resides in the cytoplasm. The catalysed reaction is tRNA(Lys) + L-lysine + ATP = L-lysyl-tRNA(Lys) + AMP + diphosphate. The protein is Lysine--tRNA ligase (lysS) of Deinococcus radiodurans (strain ATCC 13939 / DSM 20539 / JCM 16871 / CCUG 27074 / LMG 4051 / NBRC 15346 / NCIMB 9279 / VKM B-1422 / R1).